The sequence spans 1574 residues: MSVTSWFLVSSSGTRHRLPRELIFVGRDECELMLQSRSVDKQHAVINYDQDRDEHWVKDLGSLNGTFVNDVRIPDQKYITLKLNDVIRFGYDSNMYVLERVQHRVPEEALKHEKYTSQLQVSVKVSAPKRGDALPDHTPYCESSQPRPEKGDRRHGAEAVAYRTPLYGQPSWWGEDDSGAPSEDRHQEEPYSERPKDLAQQNGELDSCRAPAEPPDYSFRREPSYFEIPTKETPQPPRLPEVPTQEVPTKDQEAGVGGTAPVVQSHASFTIEFDDCSPGKVKIKDHITKFSLRQRRAPSKETTPVETVSAETKVADWLVQNDPSLLRRDGPGDDRHSTKSDLPVHTRTLKGHKHEDGTQSDSEDPLAKTASVSGASAEASGEQVRLQRQIKRDPQELLHNQQAFVIEFFDGDTPRKKRSQSFTHTPPADPKADKRRGPGTSDRDRPGVSVRATGSSSGPQRASSLKREKTEERLGNTSPVPRASTRSFGSVGRRSRLAQDFMAQCMRDSSPATRPAPEKTPPVLPAPLTPRGASPVTPSTTPPPPTDPQLTKARKQEEDDSLSDAGTYTIETEAQDQEVEEARRMIDQVFGVFESPELSRVSSATFRPVIRGDKDESSDGGMAQRMALLQEFASRAPGMAPQMEQQSLLVPGSPGGQKWVSRWASLADSYSDAGLPEDGPGRRTGEPEGPLPVRTRRLLPQLPSGRADSPAGLEAARRNGPGPPELGSEPANCLIGQEDLDPDSLSDASGSDGGRGPEPGTERQEDLAWVRGRRSPRAPGELVPTSFFIGDQNGEATFPKKSFVGPGEVDGPGRVVQTSPSARDGLYVSSNGRMVIQLRSGRSPEPDPAPPKETLTFARQESFTKEPTSGPPAPGKLPHISSHPLLQDLAAARASRLDFHAQDTHLILKETETALAALEARLRSKSADECDGGSTPRPPEDSLSGDSDVDTASTISLLSGKNGPSPTTPQTPGPQKESPLSPPTVPDPGGATPGSARERMSERQHRPTPADLGPGDTSRRAAMRRGHGSRGSLDWPEEERGSGLAHLPSSNHETPEATLAGRQGPRRKPAAPPPSPAAREEQSRSSATAQKVQQALTRSNSLSTPRPTRASRLRRARLGDASDTEAVDGERGTAANPEPANRAAPEQAKKLTRLDILAMPRKRAGSFTGPSDSETAPARTGFSGRSAELYSTSRKPTIAEARAAAKKAAATAANTGPRQPFSRARPGSARYSSNTRRRQQGSDYTSTSEEEYGSHHSSPKHTRSHASTATQTPRGSSSTRARSQGPRDTDDDEEEPDPYGFIVQTAEIAEIARLSQTLVKDVAILAREIHDVAGDGDSLGSPGPTRSPSLGNVPNTPASTISAREELVQRIPEASLNFQKVPPGSMNSHNLDQNMNDSRDDALTNKTRPRNREEVIFDNLMLNPVSQLSHAIRENTEHLAEKMKVLFQNTGRAWEDLEARINSENEVPILKTSNKEISSILKELRRVQKQLEVINAIVDPSLNLDLLMGNRAPSGSGQPGLGKARPAAQSSTSPASVDTLLPALPLRSFPQRANCGPPGLPEPAFLPDAERFLI.

One can recognise an FHA domain in the interval 23-73; it reads IFVGRDECELMLQSRSVDKQHAVINYDQDRDEHWVKDLGSLNGTFVNDVRI. 3 disordered regions span residues 121 to 258, 316 to 395, and 409 to 578; these read VSVK…GVGG, DWLV…RDPQ, and FDGD…QDQE. Basic and acidic residues-rich tracts occupy residues 147-157, 182-197, and 325-344; these read RPEKGDRRHGA, SEDRHQEEPYSERPKD, and LLRRDGPGDDRHSTKSDLPV. The residue at position 360 (Ser360) is a Phosphoserine. Residues 370–382 show a composition bias toward low complexity; the sequence is ASVSGASAEASGE. At Ser421 the chain carries Phosphoserine. A compositionally biased stretch (basic and acidic residues) spans 430 to 446; sequence PKADKRRGPGTSDRDRP. The span at 452 to 463 shows a compositional bias: polar residues; sequence ATGSSSGPQRAS. Residues 465 to 474 show a composition bias toward basic and acidic residues; it reads LKREKTEERL. Residues 475 to 488 are compositionally biased toward polar residues; it reads GNTSPVPRASTRSF. Phosphoserine is present on residues Ser478 and Ser490. Positions 518–528 are enriched in pro residues; sequence EKTPPVLPAPL. The residue at position 534 (Ser534) is a Phosphoserine. A phosphothreonine mark is found at Thr540 and Thr541. A phosphoserine mark is found at Ser595, Ser617, Ser653, Ser709, Ser744, Ser746, Ser749, Ser751, Ser819, and Ser843. Disordered regions lie at residues 637 to 826, 839 to 882, 924 to 1300, 1333 to 1358, 1377 to 1407, and 1510 to 1535; these read PGMA…RDGL, RSGR…HISS, SKSA…DPYG, AGDGDSLGSPGPTRSPSLGNVPNTPA, NFQKVPPGSMNSHNLDQNMNDSRDDALTNKT, and NRAPSGSGQPGLGKARPAAQSSTSPA. Positions 857–867 are enriched in polar residues; sequence FARQESFTKEP. Ser947 carries the post-translational modification Phosphoserine. Over residues 950–959 the composition is skewed to polar residues; that stretch reads DTASTISLLS. 2 positions are modified to phosphoserine: Ser965 and Ser981. A compositionally biased stretch (basic and acidic residues) spans 996 to 1005; sequence ARERMSERQH. A compositionally biased stretch (polar residues) spans 1084–1102; that stretch reads RSSATAQKVQQALTRSNSL. Phosphoserine is present on Ser1122. A compositionally biased stretch (low complexity) spans 1134-1146; it reads AANPEPANRAAPE. 2 positions are modified to phosphoserine: Ser1166 and Ser1186. Residues 1199-1213 are compositionally biased toward low complexity; it reads AEARAAAKKAAATAA. Residues 1265 to 1282 show a composition bias toward polar residues; it reads HASTATQTPRGSSSTRAR. Position 1289 is a phosphothreonine (Thr1289). Residue Ser1341 is modified to Phosphoserine. Polar residues-rich tracts occupy residues 1344 to 1358 and 1385 to 1396; these read PTRSPSLGNVPNTPA and SMNSHNLDQNMN. A Phosphothreonine modification is found at Thr1345. Ser1347 is modified (phosphoserine). Residues Ser1530 and Ser1533 each carry the phosphoserine modification.

This sequence belongs to the CEP170 family.

It is found in the cytoplasm. Its subcellular location is the cytoskeleton. Its function is as follows. Plays a role in microtubule organization. The sequence is that of Centrosomal protein of 170 kDa protein B (Cep170b) from Mus musculus (Mouse).